A 321-amino-acid chain; its full sequence is Glucokinase (321 aa).

ATP is bound at residue 8-13 (GDVGGT).

This sequence belongs to the bacterial glucokinase family.

The protein resides in the cytoplasm. The enzyme catalyses D-glucose + ATP = D-glucose 6-phosphate + ADP + H(+). The sequence is that of Glucokinase from Salmonella agona (strain SL483).